We begin with the raw amino-acid sequence, 41 residues long: RMPSLSIDLPMSVLRQKLSLEKERKVQALRAAANRNFLNDI.

At Ile41 the chain carries Isoleucine amide.

It is found in the secreted. Functionally, regulation of fluid secretion. May stimulate primary urine secretion by Malpighian tubules and causes a dose-dependent stimulation of cAMP levels in the tubules. The sequence is that of Diuretic hormone 1 from Hyles lineata (White-lined sphinx moth).